A 555-amino-acid chain; its full sequence is Potassium-transporting ATPase potassium-binding subunit (555 aa).

10 consecutive transmembrane segments (helical) span residues 2-22 (IWVA…PTGI), 60-80 (QYAL…YFVF), 130-150 (IGIT…VMAF), 173-193 (VFLP…VPQT), 246-266 (MSNI…PFTY), 278-298 (ILFV…TTSE), 374-394 (AGFV…GLMV), 412-432 (LIAV…ALAL), 483-503 (LVMF…AASL), and 525-545 (GIFI…MLVL).

This sequence belongs to the KdpA family. As to quaternary structure, the system is composed of three essential subunits: KdpA, KdpB and KdpC.

The protein resides in the cell membrane. Part of the high-affinity ATP-driven potassium transport (or Kdp) system, which catalyzes the hydrolysis of ATP coupled with the electrogenic transport of potassium into the cytoplasm. This subunit binds the extracellular potassium ions and delivers the ions to the membrane domain of KdpB through an intramembrane tunnel. The sequence is that of Potassium-transporting ATPase potassium-binding subunit from Bacillus cereus (strain ATCC 10987 / NRS 248).